A 211-amino-acid polypeptide reads, in one-letter code: Protein-methionine-sulfoxide reductase heme-binding subunit MsrQ (211 aa).

5 consecutive transmembrane segments (helical) span residues L17–A37, L82–V102, P116–T136, F153–S173, and I178–F198.

This sequence belongs to the MsrQ family. As to quaternary structure, heterodimer of a catalytic subunit (MsrP) and a heme-binding subunit (MsrQ). It depends on FMN as a cofactor. Requires heme b as cofactor.

The protein localises to the cell inner membrane. Its function is as follows. Part of the MsrPQ system that repairs oxidized periplasmic proteins containing methionine sulfoxide residues (Met-O), using respiratory chain electrons. Thus protects these proteins from oxidative-stress damage caused by reactive species of oxygen and chlorine generated by the host defense mechanisms. MsrPQ is essential for the maintenance of envelope integrity under bleach stress, rescuing a wide series of structurally unrelated periplasmic proteins from methionine oxidation, including the primary periplasmic chaperone SurA and the lipoprotein Pal. MsrQ provides electrons for reduction to the reductase catalytic subunit MsrP, using the quinone pool of the respiratory chain. This is Protein-methionine-sulfoxide reductase heme-binding subunit MsrQ from Shigella boydii serotype 4 (strain Sb227).